A 200-amino-acid polypeptide reads, in one-letter code: Ankyrin repeat-containing protein YAR1 (200 aa).

ANK repeat units follow at residues 49–78 (SDSTALHMAAANGHIETVRYILETVSRANS) and 92–121 (TGNTALHWASLNGKLDVVKLLCDEYEADPF). Position 78 is a phosphoserine (serine 78). Residues 152 to 173 (VEPEDDEEDTQTEGKNSVQITK) form a disordered region. A compositionally biased stretch (acidic residues) spans 153–162 (EPEDDEEDTQ). The segment covering 164-173 (EGKNSVQITK) has biased composition (polar residues).

In terms of biological role, required for normal rate of cell proliferation. This is Ankyrin repeat-containing protein YAR1 (YAR1) from Saccharomyces cerevisiae (strain ATCC 204508 / S288c) (Baker's yeast).